Reading from the N-terminus, the 318-residue chain is Homoserine kinase (318 aa).

Proline 97–cysteine 107 provides a ligand contact to ATP.

The protein belongs to the GHMP kinase family. Homoserine kinase subfamily.

It localises to the cytoplasm. It catalyses the reaction L-homoserine + ATP = O-phospho-L-homoserine + ADP + H(+). It functions in the pathway amino-acid biosynthesis; L-threonine biosynthesis; L-threonine from L-aspartate: step 4/5. Catalyzes the ATP-dependent phosphorylation of L-homoserine to L-homoserine phosphate. This chain is Homoserine kinase, found in Vibrio cholerae serotype O1 (strain ATCC 39541 / Classical Ogawa 395 / O395).